We begin with the raw amino-acid sequence, 201 residues long: Small ribosomal subunit protein uS4c (201 aa).

The tract at residues 16–43 is disordered; sequence GALPGLTSKKPRSASDLRNQSRSGKRSQ. One can recognise an S4 RNA-binding domain in the interval 89–169; sequence MRLDNILFRL…LPKHLTLHSF (81 aa).

It belongs to the universal ribosomal protein uS4 family. In terms of assembly, part of the 30S ribosomal subunit. Contacts protein S5. The interaction surface between S4 and S5 is involved in control of translational fidelity.

Its subcellular location is the plastid. It is found in the chloroplast. In terms of biological role, one of the primary rRNA binding proteins, it binds directly to 16S rRNA where it nucleates assembly of the body of the 30S subunit. Functionally, with S5 and S12 plays an important role in translational accuracy. The protein is Small ribosomal subunit protein uS4c (rps4) of Nymphaea alba (White water-lily).